A 331-amino-acid chain; its full sequence is Biotin synthase (331 aa).

The region spanning 46–275 is the Radical SAM core domain; that stretch reads YYGKKVKLNM…TKEIRISGGR (230 aa). Residues C64, C68, and C71 each coordinate [4Fe-4S] cluster. The [2Fe-2S] cluster site is built by C108, C140, C200, and R270.

Belongs to the radical SAM superfamily. Biotin synthase family. As to quaternary structure, homodimer. [4Fe-4S] cluster serves as cofactor. Requires [2Fe-2S] cluster as cofactor.

The enzyme catalyses (4R,5S)-dethiobiotin + (sulfur carrier)-SH + 2 reduced [2Fe-2S]-[ferredoxin] + 2 S-adenosyl-L-methionine = (sulfur carrier)-H + biotin + 2 5'-deoxyadenosine + 2 L-methionine + 2 oxidized [2Fe-2S]-[ferredoxin]. It functions in the pathway cofactor biosynthesis; biotin biosynthesis; biotin from 7,8-diaminononanoate: step 2/2. Functionally, catalyzes the conversion of dethiobiotin (DTB) to biotin by the insertion of a sulfur atom into dethiobiotin via a radical-based mechanism. The polypeptide is Biotin synthase (Lysinibacillus sphaericus (strain C3-41)).